The following is a 584-amino-acid chain: Chaperonin GroEL 1 (584 aa).

ATP-binding positions include 29 to 32, 86 to 90, glycine 413, and aspartate 492; these read TIGP and DGTTT. Positions 523–542 are disordered; the sequence is EPEAAAPGGPGGDPMGGMGG. A compositionally biased stretch (gly residues) spans 530–542; the sequence is GGPGGDPMGGMGG.

It belongs to the chaperonin (HSP60) family. As to quaternary structure, forms a cylinder of 14 subunits composed of two heptameric rings stacked back-to-back. Interacts with the co-chaperonin GroES.

The protein localises to the cytoplasm. The catalysed reaction is ATP + H2O + a folded polypeptide = ADP + phosphate + an unfolded polypeptide.. Functionally, together with its co-chaperonin GroES, plays an essential role in assisting protein folding. The GroEL-GroES system forms a nano-cage that allows encapsulation of the non-native substrate proteins and provides a physical environment optimized to promote and accelerate protein folding. The sequence is that of Chaperonin GroEL 1 from Prochlorococcus marinus (strain MIT 9312).